The primary structure comprises 816 residues: DNA helicase MCM8 (816 aa).

The disordered stretch occupies residues 1–52 (MNGKYRGRGFGQGRFQSWKSGRGGRGFSGKWREREHRPDLNKATGKHPEQTP). Residues 30-40 (KWREREHRPDL) show a composition bias toward basic and acidic residues. In terms of domain architecture, MCM spans 378 to 585 (LFKLIVNSLC…DHDHLLSEHV (208 aa)). Position 430 to 437 (430 to 437 (GDPGLGKS)) interacts with ATP. Position 606 is a phosphoserine (Ser606).

Belongs to the MCM family. Component of the MCM8-MCM9 complex, which forms a hexamer composed of MCM8 and MCM9. Interacts with the DNA mismatch repair (MMR) complex composed at least of MSH2, MSH3, MSH6, PMS1 and MLH1. Interacts with RAD51; the interaction recruits RAD51 to DNA damage sites. Interacts with the MRN complex composed of MRE11, RAD50 and NBN/NBS1. Interacts with CDC6 and ORC2. Interacts with HROB; the interaction recruits the MCM8-MCM9 complex to DNA damage sites.

The protein localises to the nucleus. It localises to the chromosome. It catalyses the reaction ATP + H2O = ADP + phosphate + H(+). In terms of biological role, component of the MCM8-MCM9 complex, a complex involved in the repair of double-stranded DNA breaks (DBSs) and DNA interstrand cross-links (ICLs) by homologous recombination (HR). Required for DNA resection by the MRE11-RAD50-NBN/NBS1 (MRN) complex by recruiting the MRN complex to the repair site and by promoting the complex nuclease activity. Probably by regulating the localization of the MNR complex, indirectly regulates the recruitment of downstream effector RAD51 to DNA damage sites including DBSs and ICLs. The MCM8-MCM9 complex is dispensable for DNA replication and S phase progression. However, may play a non-essential for DNA replication: may be involved in the activation of the prereplicative complex (pre-RC) during G(1) phase by recruiting CDC6 to the origin recognition complex (ORC). Probably by regulating HR, plays a key role during gametogenesis. Stabilizes MCM9 protein. In Bos taurus (Bovine), this protein is DNA helicase MCM8 (MCM8).